The primary structure comprises 135 residues: Photosystem II extrinsic protein U (135 aa).

The N-terminal stretch at 1 to 29 (MKRLLSWLTGALLMAGLLAGLILPGSVHA) is a signal peptide.

The protein belongs to the PsbU family. PSII is composed of 1 copy each of membrane proteins PsbA, PsbB, PsbC, PsbD, PsbE, PsbF, PsbH, PsbI, PsbJ, PsbK, PsbL, PsbM, PsbT, PsbX, PsbY, Psb30/Ycf12, peripheral proteins PsbO, CyanoQ (PsbQ), PsbU, PsbV and a large number of cofactors. It forms dimeric complexes.

It is found in the cellular thylakoid membrane. Its function is as follows. One of the extrinsic, lumenal subunits of photosystem II (PSII). PSII is a light-driven water plastoquinone oxidoreductase, using light energy to abstract electrons from H(2)O, generating a proton gradient subsequently used for ATP formation. The extrinsic proteins stabilize the structure of photosystem II oxygen-evolving complex (OEC), the ion environment of oxygen evolution and protect the OEC against heat-induced inactivation. In Parasynechococcus marenigrum (strain WH8102), this protein is Photosystem II extrinsic protein U.